The sequence spans 72 residues: Large ribosomal subunit protein uL29 (72 aa).

This sequence belongs to the universal ribosomal protein uL29 family.

The sequence is that of Large ribosomal subunit protein uL29 (rpmC) from Chlamydia pneumoniae (Chlamydophila pneumoniae).